The following is a 173-amino-acid chain: 3-isopropylmalate dehydratase small subunit (173 aa).

Belongs to the LeuD family. LeuD type 2 subfamily. Heterodimer of LeuC and LeuD.

It carries out the reaction (2R,3S)-3-isopropylmalate = (2S)-2-isopropylmalate. It functions in the pathway amino-acid biosynthesis; L-leucine biosynthesis; L-leucine from 3-methyl-2-oxobutanoate: step 2/4. In terms of biological role, catalyzes the isomerization between 2-isopropylmalate and 3-isopropylmalate, via the formation of 2-isopropylmaleate. The protein is 3-isopropylmalate dehydratase small subunit of Caldicellulosiruptor saccharolyticus (strain ATCC 43494 / DSM 8903 / Tp8T 6331).